A 248-amino-acid chain; its full sequence is Sulfur carrier protein FdhD (248 aa).

Cys-99 acts as the Cysteine persulfide intermediate in catalysis. 232–237 lines the Mo-bis(molybdopterin guanine dinucleotide) pocket; that stretch reads FVRGKR.

The protein belongs to the FdhD family.

It is found in the cytoplasm. Functionally, required for formate dehydrogenase (FDH) activity. Acts as a sulfur carrier protein that transfers sulfur from IscS to the molybdenum cofactor prior to its insertion into FDH. This is Sulfur carrier protein FdhD from Methanothermobacter thermautotrophicus (strain ATCC 29096 / DSM 1053 / JCM 10044 / NBRC 100330 / Delta H) (Methanobacterium thermoautotrophicum).